A 185-amino-acid chain; its full sequence is Small ribosomal subunit protein uS5c (185 aa).

The S5 DRBM domain maps to 26–89 (FVERLIKISR…ADGRKNLIKI (64 aa)).

It belongs to the universal ribosomal protein uS5 family. In terms of assembly, part of the 30S ribosomal subunit. Contacts protein S4.

The protein resides in the plastid. It localises to the chloroplast. Functionally, with S4 and S12 plays an important role in translational accuracy. This is Small ribosomal subunit protein uS5c (rps5) from Trieres chinensis (Marine centric diatom).